Reading from the N-terminus, the 993-residue chain is DNA-binding protein SMUBP-2 (993 aa).

Residue alanine 2 is modified to N-acetylalanine. Residues 214 to 221 (GPPGTGKT), glutamine 403, tyrosine 442, and glutamate 571 contribute to the ATP site. Positions 638–785 (TAFEYLDDIV…KRRFITVSKR (148 aa)) are SS DNA-binding. Disordered regions lie at residues 651-723 (YSHE…VESQ), 782-828 (VSKR…PDQP), and 841-879 (VRSA…DLPT). Composition is skewed to polar residues over residues 653–662 (HENSQGSSHA) and 669–681 (PATS…QRQE). Residues 723 to 786 (QDGVDHFRAM…RRFITVSKRA (64 aa)) form the R3H domain. Basic and acidic residues predominate over residues 818–828 (PPREQRGPDQP). Over residues 842–859 (RSAQGQPASKEQQASGQQ) the composition is skewed to polar residues. The short motif at 864–868 (KKKKK) is the Nuclear localization signal element. The segment at 891–940 (VKADNTCGFAKCTAGVTTLGQFCQLCSRRYCLSHHLPEIHGCGERARAHA) adopts an AN1-type zinc-finger fold. The Zn(2+) site is built by cysteine 897, cysteine 902, cysteine 913, cysteine 916, cysteine 921, histidine 924, histidine 930, and cysteine 932. The disordered stretch occupies residues 971–993 (RRLDKKLSELSNQRTSRRKERGT).

This sequence belongs to the DNA2/NAM7 helicase family. As to quaternary structure, homooligomer. Interacts with RUVBL1. Interacts with RUVBL2. Interacts with GTF3C1. Interacts with ABT1. Interacts with ribosomes. As to expression, expressed in all tissues examined. Expressed in the developing and adult human brain, with highest expression in the cerebellum. Moderately expressed in fibroblasts.

The protein localises to the nucleus. It localises to the cytoplasm. Its subcellular location is the cell projection. The protein resides in the axon. It catalyses the reaction ATP + H2O = ADP + phosphate + H(+). Functionally, 5' to 3' helicase that unwinds RNA and DNA duplexes in an ATP-dependent reaction. Specific to 5'-phosphorylated single-stranded guanine-rich sequences. May play a role in RNA metabolism, ribosome biogenesis or initiation of translation. May play a role in regulation of transcription. Interacts with tRNA-Tyr. This chain is DNA-binding protein SMUBP-2 (IGHMBP2), found in Homo sapiens (Human).